We begin with the raw amino-acid sequence, 94 residues long: Sucrose operon repressor (94 aa).

The region spanning 1–56 (MASLHDVARLAGVSKSTVSRVINDEYGVKEATKQKVRQAVAECGYVPNQVAKDLKE) is the HTH lacI-type domain. Positions 4–23 (LHDVARLAGVSKSTVSRVIN) form a DNA-binding region, H-T-H motif.

Functionally, repressor for the scr operon. Binds D-fructose as an inducer. The polypeptide is Sucrose operon repressor (scrR) (Vibrio alginolyticus).